The chain runs to 252 residues: 2-succinyl-6-hydroxy-2,4-cyclohexadiene-1-carboxylate synthase (252 aa).

This sequence belongs to the AB hydrolase superfamily. MenH family. In terms of assembly, monomer.

It catalyses the reaction 5-enolpyruvoyl-6-hydroxy-2-succinyl-cyclohex-3-ene-1-carboxylate = (1R,6R)-6-hydroxy-2-succinyl-cyclohexa-2,4-diene-1-carboxylate + pyruvate. Its pathway is quinol/quinone metabolism; 1,4-dihydroxy-2-naphthoate biosynthesis; 1,4-dihydroxy-2-naphthoate from chorismate: step 3/7. It participates in quinol/quinone metabolism; menaquinone biosynthesis. Its function is as follows. Catalyzes a proton abstraction reaction that results in 2,5-elimination of pyruvate from 2-succinyl-5-enolpyruvyl-6-hydroxy-3-cyclohexene-1-carboxylate (SEPHCHC) and the formation of 2-succinyl-6-hydroxy-2,4-cyclohexadiene-1-carboxylate (SHCHC). This chain is 2-succinyl-6-hydroxy-2,4-cyclohexadiene-1-carboxylate synthase, found in Shigella dysenteriae serotype 1 (strain Sd197).